The primary structure comprises 203 residues: Interferon type B (203 aa).

The signal sequence occupies residues 1-27 (MTANHQSPGMHSILLLLLLPALTTTFS). 2 disulfides stabilise this stretch: C28–C125 and C57–C164. N-linked (GlcNAc...) asparagine glycans are attached at residues N37 and N160.

Belongs to the alpha/beta interferon family.

The protein resides in the secreted. Has antiviral activities. This is Interferon type B (IFNB) from Gallus gallus (Chicken).